The chain runs to 161 residues: MNPRRKKRLGIVLAIFIGISATIGLMLYALNQNMDLFYTPTELVNGKPDGTKPEVGQRLRIGGMVVVGSVRRDPNSLKVSFDLHDVGPKVTITYEGILPDLFREGQGIVAQGVLKDATTVEAFEVLAKHDEEYMPPEIAEAMKKTHEPLQYSSEQKQGSGE.

Over 1–8 (MNPRRKKR) the chain is Cytoplasmic. A helical; Signal-anchor for type II membrane protein transmembrane segment spans residues 9–29 (LGIVLAIFIGISATIGLMLYA). Residues 30–161 (LNQNMDLFYT…SSEQKQGSGE (132 aa)) are Periplasmic-facing. Residues H129 and Y133 each contribute to the heme site. The segment at 142–161 (MKKTHEPLQYSSEQKQGSGE) is disordered. Polar residues predominate over residues 150–161 (QYSSEQKQGSGE).

The protein belongs to the CcmE/CycJ family.

The protein localises to the cell inner membrane. In terms of biological role, heme chaperone required for the biogenesis of c-type cytochromes. Transiently binds heme delivered by CcmC and transfers the heme to apo-cytochromes in a process facilitated by CcmF and CcmH. This is Cytochrome c-type biogenesis protein CcmE from Vibrio parahaemolyticus serotype O3:K6 (strain RIMD 2210633).